The chain runs to 322 residues: Pilin gene-inverting protein (322 aa).

May be the site-specific invertase required for pilin gene inversion. Moraxella can express either a Q or I pilin; the inversion of 2 kb of DNA determines which pilin is expressed. This is Pilin gene-inverting protein (piv) from Moraxella bovis.